We begin with the raw amino-acid sequence, 207 residues long: Uridine kinase (207 aa).

ATP is bound at residue 13-20 (GASGSGKT).

It belongs to the uridine kinase family.

It localises to the cytoplasm. The catalysed reaction is uridine + ATP = UMP + ADP + H(+). It catalyses the reaction cytidine + ATP = CMP + ADP + H(+). The protein operates within pyrimidine metabolism; CTP biosynthesis via salvage pathway; CTP from cytidine: step 1/3. It functions in the pathway pyrimidine metabolism; UMP biosynthesis via salvage pathway; UMP from uridine: step 1/1. The protein is Uridine kinase of Ureaplasma urealyticum serovar 10 (strain ATCC 33699 / Western).